The sequence spans 579 residues: Potassium-transporting ATPase potassium-binding subunit (579 aa).

10 consecutive transmembrane segments (helical) span residues M2–L22, S66–F86, G135–I155, V177–V197, T260–F280, G292–V312, V391–F411, V437–L457, F490–F510, and F546–L566.

The protein belongs to the KdpA family. In terms of assembly, the system is composed of three essential subunits: KdpA, KdpB and KdpC.

The protein resides in the cell membrane. Functionally, part of the high-affinity ATP-driven potassium transport (or Kdp) system, which catalyzes the hydrolysis of ATP coupled with the electrogenic transport of potassium into the cytoplasm. This subunit binds the extracellular potassium ions and delivers the ions to the membrane domain of KdpB through an intramembrane tunnel. The sequence is that of Potassium-transporting ATPase potassium-binding subunit from Clostridium botulinum (strain Eklund 17B / Type B).